Consider the following 299-residue polypeptide: Protein bem46 (299 aa).

Residues tyrosine 15–tyrosine 32 form a helical membrane-spanning segment.

It belongs to the serine esterase family.

The protein resides in the membrane. Functionally, suppressor of bem1/bud5. The chain is Protein bem46 (bem46) from Schizosaccharomyces pombe (strain 972 / ATCC 24843) (Fission yeast).